A 287-amino-acid chain; its full sequence is Membrane protein insertase YidC 2 (287 aa).

The N-terminal stretch at 1-26 (MKKKKRFKQKLLIASLVIGLVAVLSG) is a signal peptide. The N-palmitoyl cysteine moiety is linked to residue C27. A lipid anchor (S-diacylglycerol cysteine) is attached at C27. 5 consecutive transmembrane segments (helical) span residues 65-85 (YAVGIIVVTILIRLLIMPLMI), 135-155 (MMGCLPLLIQMPILLGFYQAI), 178-198 (YILPIVAALTTFLSSKISMMG), 207-224 (AMIVYIMPVMILFMGITL), and 228-250 (LALYWIIGNIFTVFQTLLINNPF).

Belongs to the OXA1/ALB3/YidC family. Type 2 subfamily.

It localises to the cell membrane. Required for the insertion and/or proper folding and/or complex formation of integral membrane proteins into the membrane. Involved in integration of membrane proteins that insert both dependently and independently of the Sec translocase complex, as well as at least some lipoproteins. This is Membrane protein insertase YidC 2 from Listeria innocua serovar 6a (strain ATCC BAA-680 / CLIP 11262).